The primary structure comprises 1249 residues: DNA repair protein REV1 (1249 aa).

Residues 44 to 131 (TASAIFSGVA…RLLSSAPYQL (88 aa)) enclose the BRCT domain. The segment at 253-323 (LSLDSTQEEK…STVQGPSSTK (71 aa)) is disordered. Residues 259–275 (QEEKRAEKSNADFRDCT) show a composition bias toward basic and acidic residues. Polar residues predominate over residues 294-319 (RTNSLSPSLHSNTKINGAHHSTVQGP). The tract at residues 350–360 (FYSRSRLHHIS) is interaction with target DNA. DCTP contacts are provided by residues Arg355, 421-425 (DMDCF), 508-514 (SCSYEAR), Asn520, and Asp568. One can recognise a UmuC domain in the interval 417 to 651 (VMHVDMDCFF…QLVTNLPGVG (235 aa)). Asp421 is a binding site for Mg(2+). Mg(2+) is bound by residues Asp568 and Glu569. Interaction with target DNA stretches follow at residues 651-654 (GRSM) and 707-715 (RKSVSAEIN). A compositionally biased stretch (basic and acidic residues) spans 1035–1047 (AYDQRQRQGEDTT). Positions 1035 to 1109 (AYDQRQRQGE…LPGAYGSPQK (75 aa)) are disordered. Positions 1048–1057 (HQQPTSTSVP) are enriched in polar residues. The Nuclear localization signal signature appears at 1072-1078 (KRNKRKN). Residues 1150–1249 (FRPAAPNLAG…QTYGSTLKVT (100 aa)) form a protein interaction domain; mediates interaction with DNA polymerase zeta region.

Belongs to the DNA polymerase type-Y family. In terms of assembly, interacts with FAAP20. Monomer. Interacts with the DNA polymerase zeta which is composed of REV3L and MAD2L2; the interaction with MAD2L2 is direct and requires that REV3L is in its closed conformation. Interacts with POLH, POLI and POLK. In terms of tissue distribution, ubiquitous.

Its subcellular location is the nucleus. In terms of biological role, deoxycytidyl transferase involved in DNA repair. Transfers a dCMP residue from dCTP to the 3'-end of a DNA primer in a template-dependent reaction. May assist in the first step in the bypass of abasic lesions by the insertion of a nucleotide opposite the lesion. Required for normal induction of mutations by physical and chemical agents. The polypeptide is DNA repair protein REV1 (Rev1) (Mus musculus (Mouse)).